Here is a 354-residue protein sequence, read N- to C-terminus: Protein-arginine kinase (354 aa).

In terms of domain architecture, Phosphagen kinase C-terminal spans 24–254 (IVLSSRIRLA…QQIIQQEKMA (231 aa)). ATP contacts are provided by residues 27–31 (SSRIR), His-92, Arg-125, 176–180 (RASVM), and 207–212 (RGIYGE). The RDXXRA motif of the pArg binding pocket involved in allosteric regulation motif lies at 337 to 342 (RDYRRA).

This sequence belongs to the ATP:guanido phosphotransferase family.

It catalyses the reaction L-arginyl-[protein] + ATP = N(omega)-phospho-L-arginyl-[protein] + ADP + H(+). With respect to regulation, appears to be allosterically activated by the binding of pArg-containing polypeptides to the pArg-binding pocket localized in the C-terminal domain of McsB. Its function is as follows. Catalyzes the specific phosphorylation of arginine residues in a large number of proteins. Is part of the bacterial stress response system. Protein arginine phosphorylation has a physiologically important role and is involved in the regulation of many critical cellular processes, such as protein homeostasis, motility, competence, and stringent and stress responses, by regulating gene expression and protein activity. The polypeptide is Protein-arginine kinase (Bacillus cereus (strain G9842)).